A 382-amino-acid polypeptide reads, in one-letter code: D-galactonate dehydratase (382 aa).

A Mg(2+)-binding site is contributed by Asp183. The active-site Proton donor is the His185. Positions 209 and 235 each coordinate Mg(2+). His285 serves as the catalytic Proton acceptor.

The protein belongs to the mandelate racemase/muconate lactonizing enzyme family. GalD subfamily. Mg(2+) serves as cofactor.

It carries out the reaction D-galactonate = 2-dehydro-3-deoxy-D-galactonate + H2O. Its pathway is carbohydrate acid metabolism; D-galactonate degradation; D-glyceraldehyde 3-phosphate and pyruvate from D-galactonate: step 1/3. In terms of biological role, catalyzes the dehydration of D-galactonate to 2-keto-3-deoxy-D-galactonate. In Escherichia fergusonii (strain ATCC 35469 / DSM 13698 / CCUG 18766 / IAM 14443 / JCM 21226 / LMG 7866 / NBRC 102419 / NCTC 12128 / CDC 0568-73), this protein is D-galactonate dehydratase.